A 446-amino-acid polypeptide reads, in one-letter code: MNASPSTIVAIATAAGTGGIGIVRLSGPQSVQIAAALGIAGLQSRHARYARFRDAQGEVIDDGIAVWFPAPHSFTGEEVVELQGHGSPVLLRQLVARCIALGARQARAGEFSERAFLNGKLDLAQAEAIADLIAAGDLRAARAARRSLDGVFSRRVDAVSESLTRLRIHVEAAIDFADEPLDTLGGAQVREELTRTRALLAQLLRDAERGRKLRDGLHAVLIGPPNAGKSSLLNALAGSDRAIVTDVAGTTRDTLHEAIQLDGFELTLVDTAGLREGGDAIEREGMRRARAELQRADLALIVLDARDPQAARDALGDAIDAVPRRLWIHNKCDLLAVAGPMDADAIAVSAVTGQGLEHLHTRLRELALGDGIESVDGEFSARTRHVDALHRAEQHADAADLELRYEQLELAAEELRLAHEALGEITGKLSADDLLGKIFSSFCIGK.

Residues Arg24, Glu81, and Lys120 each coordinate (6S)-5-formyl-5,6,7,8-tetrahydrofolate. The TrmE-type G domain maps to 216-368; that stretch reads GLHAVLIGPP…LHTRLRELAL (153 aa). Asn226 serves as a coordination point for K(+). Residues 226–231, 245–251, and 270–273 each bind GTP; these read NAGKSS, TDVAGTT, and DTAG. Residue Ser230 coordinates Mg(2+). K(+)-binding residues include Thr245, Val247, and Thr250. Thr251 provides a ligand contact to Mg(2+). Lys446 serves as a coordination point for (6S)-5-formyl-5,6,7,8-tetrahydrofolate.

It belongs to the TRAFAC class TrmE-Era-EngA-EngB-Septin-like GTPase superfamily. TrmE GTPase family. In terms of assembly, homodimer. Heterotetramer of two MnmE and two MnmG subunits. It depends on K(+) as a cofactor.

The protein resides in the cytoplasm. Its function is as follows. Exhibits a very high intrinsic GTPase hydrolysis rate. Involved in the addition of a carboxymethylaminomethyl (cmnm) group at the wobble position (U34) of certain tRNAs, forming tRNA-cmnm(5)s(2)U34. This Xanthomonas campestris pv. campestris (strain B100) protein is tRNA modification GTPase MnmE.